The chain runs to 1119 residues: Protein translocase subunit SecA (1119 aa).

ATP contacts are provided by residues Q177, 195 to 199 (GEGKT), and D692. Residues 1025–1081 (APSIHEARQTKSKEKVETRKEEIPNMDERAAQSRAAGNTQRQQPEVTETIVRDRPKI) form a disordered region. Positions 1029-1055 (HEARQTKSKEKVETRKEEIPNMDERAA) are enriched in basic and acidic residues. Residues 1059–1070 (AAGNTQRQQPEV) show a composition bias toward polar residues.

Belongs to the SecA family. As to quaternary structure, monomer and homodimer. Part of the essential Sec protein translocation apparatus which comprises SecA, SecYEG and auxiliary proteins SecDF. Other proteins may also be involved.

The protein resides in the cell inner membrane. Its subcellular location is the cytoplasm. It catalyses the reaction ATP + H2O + cellular proteinSide 1 = ADP + phosphate + cellular proteinSide 2.. Part of the Sec protein translocase complex. Interacts with the SecYEG preprotein conducting channel. Has a central role in coupling the hydrolysis of ATP to the transfer of proteins into and across the cell membrane, serving as an ATP-driven molecular motor driving the stepwise translocation of polypeptide chains across the membrane. This Christiangramia forsetii (strain DSM 17595 / CGMCC 1.15422 / KT0803) (Gramella forsetii) protein is Protein translocase subunit SecA.